The following is a 270-amino-acid chain: MTRSIFIHTLLALSALTSVHGANSPGCGKNPTLANGVHQINGREYTLKIPDDYDANNPYHLIFGLHWRGGNMDNVVSGDSIQPWYGLESRAQGSAIFIAPNGLNAGWANTNGEDVAFIDAIMEQVESDLCVDQSSRFATGFSWGGGMSYSLACSRAKEFRAVSVLSGGVISGCDGGNDPIAYLGIHGINDPVLPFDGGVELAERFVGNNGCQPASIEKPQSGSNGWKRTDFYGCSKPVSFIAYDGGHDGAPLGVQSSLAPDATWEFFMAA.

An N-terminal signal peptide occupies residues 1–21; sequence MTRSIFIHTLLALSALTSVHG.

The protein belongs to the faeC family.

The protein localises to the secreted. It catalyses the reaction feruloyl-polysaccharide + H2O = ferulate + polysaccharide.. Its function is as follows. Involved in degradation of plant cell walls. Hydrolyzes the feruloyl-arabinose ester bond in arabinoxylans, and the feruloyl-galactose ester bond in pectin. Active against paranitrophenyl-acetate, methyl ferulate and wheat arabinoxylan. This chain is Probable feruloyl esterase C (faeC), found in Aspergillus niger (strain ATCC MYA-4892 / CBS 513.88 / FGSC A1513).